The sequence spans 329 residues: Probable alpha-1,2-galactosyltransferase gmh1 (329 aa).

The Cytoplasmic segment spans residues 1–14; the sequence is MLSFFTKNTLTKRK. A helical; Signal-anchor for type II membrane protein transmembrane segment spans residues 15-35; that stretch reads LIMLALAIVFTFFAFGLYFIP. At 36 to 329 the chain is on the lumenal side; the sequence is HDEISVFDFK…LWTKYKDKII (294 aa). N-linked (GlcNAc...) asparagine glycans are attached at residues Asn127 and Asn169.

This sequence belongs to the glycosyltransferase 34 family.

It localises to the golgi apparatus membrane. This is Probable alpha-1,2-galactosyltransferase gmh1 (gmh1) from Schizosaccharomyces pombe (strain 972 / ATCC 24843) (Fission yeast).